Here is a 268-residue protein sequence, read N- to C-terminus: Ribosomal RNA small subunit methyltransferase A (268 aa).

The S-adenosyl-L-methionine site is built by Asn12, Leu14, Gly38, Glu59, Asp82, and Asn107.

It belongs to the class I-like SAM-binding methyltransferase superfamily. rRNA adenine N(6)-methyltransferase family. RsmA subfamily.

The protein resides in the cytoplasm. The catalysed reaction is adenosine(1518)/adenosine(1519) in 16S rRNA + 4 S-adenosyl-L-methionine = N(6)-dimethyladenosine(1518)/N(6)-dimethyladenosine(1519) in 16S rRNA + 4 S-adenosyl-L-homocysteine + 4 H(+). Functionally, specifically dimethylates two adjacent adenosines (A1518 and A1519) in the loop of a conserved hairpin near the 3'-end of 16S rRNA in the 30S particle. May play a critical role in biogenesis of 30S subunits. The protein is Ribosomal RNA small subunit methyltransferase A of Onion yellows phytoplasma (strain OY-M).